We begin with the raw amino-acid sequence, 158 residues long: NAD(P)H-quinone oxidoreductase subunit J, chloroplastic (158 aa).

Belongs to the complex I 30 kDa subunit family. As to quaternary structure, NDH is composed of at least 16 different subunits, 5 of which are encoded in the nucleus.

Its subcellular location is the plastid. It localises to the chloroplast thylakoid membrane. It carries out the reaction a plastoquinone + NADH + (n+1) H(+)(in) = a plastoquinol + NAD(+) + n H(+)(out). The enzyme catalyses a plastoquinone + NADPH + (n+1) H(+)(in) = a plastoquinol + NADP(+) + n H(+)(out). NDH shuttles electrons from NAD(P)H:plastoquinone, via FMN and iron-sulfur (Fe-S) centers, to quinones in the photosynthetic chain and possibly in a chloroplast respiratory chain. The immediate electron acceptor for the enzyme in this species is believed to be plastoquinone. Couples the redox reaction to proton translocation, and thus conserves the redox energy in a proton gradient. This chain is NAD(P)H-quinone oxidoreductase subunit J, chloroplastic, found in Vitis vinifera (Grape).